An 81-amino-acid polypeptide reads, in one-letter code: UPF0180 protein ABC2430 (81 aa).

Belongs to the UPF0180 family.

In Shouchella clausii (strain KSM-K16) (Alkalihalobacillus clausii), this protein is UPF0180 protein ABC2430.